Consider the following 209-residue polypeptide: Peroxynitrite isomerase 2 (209 aa).

A GXWXGXG motif is present at residues 56 to 62 (GVWRGEG). Heme b contacts are provided by lysine 172 and histidine 199.

The protein belongs to the nitrobindin family. In terms of assembly, homodimer. Requires heme b as cofactor.

The enzyme catalyses peroxynitrite = nitrate. The protein operates within nitrogen metabolism. Functionally, heme-binding protein able to scavenge peroxynitrite and to protect free L-tyrosine against peroxynitrite-mediated nitration, by acting as a peroxynitrite isomerase that converts peroxynitrite to nitrate. Therefore, this protein likely plays a role in peroxynitrite sensing and in the detoxification of reactive nitrogen and oxygen species (RNS and ROS, respectively). Is able to bind nitric oxide (NO) in vitro, but may act as a sensor of peroxynitrite levels in vivo. In Mycolicibacterium gilvum (strain PYR-GCK) (Mycobacterium gilvum (strain PYR-GCK)), this protein is Peroxynitrite isomerase 2.